The following is a 154-amino-acid chain: uncharacterized protein (154 aa).

5 consecutive transmembrane segments (helical) span residues 5–24 (TLIIAVAGLFAVASSIGVLL), 29–48 (FYAALYMSVTMLFVAAIYAA), 53–75 (PVVVIIALIFVGAVGIVTVAIAA), 87–109 (IFWVVPVIVVFAILALAYASMAV), and 124–146 (ATDYFFVVAFLFTLVVLMMLSAI).

Its subcellular location is the cell membrane. This is an uncharacterized protein from Archaeoglobus fulgidus (strain ATCC 49558 / DSM 4304 / JCM 9628 / NBRC 100126 / VC-16).